Consider the following 381-residue polypeptide: Diguanylate cyclase DosC (381 aa).

H98 contributes to the heme binding site. The GGDEF domain maps to T325–S381. A Mg(2+)-binding site is contributed by D333. The substrate site is built by N341 and D350.

Requires heme as cofactor. It depends on Mg(2+) as a cofactor.

The enzyme catalyses 2 GTP = 3',3'-c-di-GMP + 2 diphosphate. Its pathway is purine metabolism; 3',5'-cyclic di-GMP biosynthesis. In terms of biological role, globin-coupled heme-based oxygen sensor protein displaying diguanylate cyclase (DGC) activity in response to oxygen availability. Thus, catalyzes the synthesis of cyclic diguanylate (c-di-GMP) via the condensation of 2 GTP molecules. Cyclic-di-GMP is a second messenger which controls cell surface-associated traits in bacteria. The sequence is that of Diguanylate cyclase DosC (dosC) from Shigella flexneri.